A 221-amino-acid chain; its full sequence is Iron-sulfur cluster repair protein YtfE (221 aa).

It belongs to the RIC family. YtfE subfamily. Homodimer.

It localises to the cytoplasm. In terms of biological role, di-iron-containing protein involved in the repair of iron-sulfur clusters damaged by oxidative and nitrosative stress conditions. The chain is Iron-sulfur cluster repair protein YtfE from Dickeya chrysanthemi (strain Ech1591) (Dickeya zeae (strain Ech1591)).